The following is a 137-amino-acid chain: Phosphoribosyl-AMP cyclohydrolase (137 aa).

Residue Asp-84 coordinates Mg(2+). A Zn(2+)-binding site is contributed by Cys-85. Mg(2+) is bound by residues Asp-86 and Asp-88. Positions 101 and 108 each coordinate Zn(2+).

This sequence belongs to the PRA-CH family. As to quaternary structure, homodimer. It depends on Mg(2+) as a cofactor. The cofactor is Zn(2+).

It localises to the cytoplasm. The catalysed reaction is 1-(5-phospho-beta-D-ribosyl)-5'-AMP + H2O = 1-(5-phospho-beta-D-ribosyl)-5-[(5-phospho-beta-D-ribosylamino)methylideneamino]imidazole-4-carboxamide. It functions in the pathway amino-acid biosynthesis; L-histidine biosynthesis; L-histidine from 5-phospho-alpha-D-ribose 1-diphosphate: step 3/9. Functionally, catalyzes the hydrolysis of the adenine ring of phosphoribosyl-AMP. The polypeptide is Phosphoribosyl-AMP cyclohydrolase (Chlorobium limicola (strain DSM 245 / NBRC 103803 / 6330)).